The chain runs to 150 residues: uncharacterized protein (150 aa).

This is an uncharacterized protein from Bacillus subtilis (strain 168).